Reading from the N-terminus, the 809-residue chain is Valine--tRNA ligase (809 aa).

A 'HIGH' region motif is present at residues 60-70; the sequence is PFTSGELHMGH. Positions 546 to 550 match the 'KMSKS' region motif; the sequence is RMSKS. Position 549 (K549) interacts with ATP.

It belongs to the class-I aminoacyl-tRNA synthetase family. ValS type 2 subfamily.

Its subcellular location is the cytoplasm. The enzyme catalyses tRNA(Val) + L-valine + ATP = L-valyl-tRNA(Val) + AMP + diphosphate. In terms of biological role, catalyzes the attachment of valine to tRNA(Val). As ValRS can inadvertently accommodate and process structurally similar amino acids such as threonine, to avoid such errors, it has a 'posttransfer' editing activity that hydrolyzes mischarged Thr-tRNA(Val) in a tRNA-dependent manner. The polypeptide is Valine--tRNA ligase (Sulfurisphaera tokodaii (strain DSM 16993 / JCM 10545 / NBRC 100140 / 7) (Sulfolobus tokodaii)).